The sequence spans 129 residues: MAFEFPAAYRFADSHEYAHLDGELIRVGISAFAVDQLGDIVFVDLPDVGASLDKGTSFGSVESVKAVEDMYAPIAGEVVERNEAVLASPEELQNDPHGAGWLLVVRPSDPAQLETLLDSATYSAKVNAG.

The Lipoyl-binding domain maps to L24–R106. K65 carries the post-translational modification N6-lipoyllysine.

The protein belongs to the GcvH family. In terms of assembly, the glycine cleavage system is composed of four proteins: P, T, L and H. It depends on (R)-lipoate as a cofactor.

Functionally, the glycine cleavage system catalyzes the degradation of glycine. The H protein shuttles the methylamine group of glycine from the P protein to the T protein. This Synechococcus sp. (strain CC9902) protein is Glycine cleavage system H protein.